A 216-amino-acid polypeptide reads, in one-letter code: Major fimbrial subunit (216 aa).

An N-terminal signal peptide occupies residues 1-20 (MKKTLLGSLILLAFAGNVQA). A disulfide bond links cysteine 41 and cysteine 81.

The protein belongs to the fimbrial protein family.

The protein resides in the fimbrium. Mediates adherence to oropharyngeal epithelial cells. Helps the airway colonization process. The protein is Major fimbrial subunit (hifA) of Haemophilus influenzae.